The primary structure comprises 409 residues: 8-amino-7-oxononanoate synthase (409 aa).

Substrate is bound at residue Arg-20. Gly-116–Tyr-117 is a binding site for pyridoxal 5'-phosphate. Residue His-141 participates in substrate binding. Pyridoxal 5'-phosphate contacts are provided by Ser-187, His-215, and Thr-243. At Lys-246 the chain carries N6-(pyridoxal phosphate)lysine. Thr-369 serves as a coordination point for substrate.

Belongs to the class-II pyridoxal-phosphate-dependent aminotransferase family. BioF subfamily. Homodimer. Pyridoxal 5'-phosphate is required as a cofactor.

It catalyses the reaction 6-carboxyhexanoyl-[ACP] + L-alanine + H(+) = (8S)-8-amino-7-oxononanoate + holo-[ACP] + CO2. Its pathway is cofactor biosynthesis; biotin biosynthesis. In terms of biological role, catalyzes the decarboxylative condensation of pimeloyl-[acyl-carrier protein] and L-alanine to produce 8-amino-7-oxononanoate (AON), [acyl-carrier protein], and carbon dioxide. This is 8-amino-7-oxononanoate synthase from Polaromonas naphthalenivorans (strain CJ2).